The sequence spans 513 residues: Palmitoyltransferase ZDHHC14 (513 aa).

Residues 1-59 (MHLGVEEPIRECQYNQICTHNSSPMDTPHIKKKKNKRKWQVFPGRNRFYCNGRIMMAKQ) are Cytoplasmic-facing. Residues 60–80 (TGVFYLTMVLILVTSGLFFAF) form a helical membrane-spanning segment. The Lumenal segment spans residues 81-88 (DCPFLASN). The helical transmembrane segment at 89-109 (LTPAIPAIGGVLFVFVMGMLL) threads the bilayer. Topologically, residues 110–207 (RASFSDPGVL…GNCVGRRNYR (98 aa)) are cytoplasmic. The region spanning 164–214 (KYCFTCKIFRPPRASHCSLCDNCVDRFDHHCPWVGNCVGRRNYRFFYLFIL) is the DHHC domain. The active-site S-palmitoyl cysteine intermediate is the Cys-194. A helical membrane pass occupies residues 208–228 (FFYLFILSLSFLTIFIFAFVI). The Lumenal portion of the chain corresponds to 229 to 266 (THVILNALRKALALSTAADFEAVQKDPTGLAFLVLSKT). Residues 267 to 287 (ALLDILEVVVCFFSVWSIVGL) form a helical membrane-spanning segment. Over 288–513 (SGFHTYLISS…VRGLVKLSSV (226 aa)) the chain is Cytoplasmic. Positions 348-369 (FIQPDTPQPATQTNGTSACPPN) are disordered. Polar residues predominate over residues 355-369 (QPATQTNGTSACPPN).

Belongs to the DHHC palmitoyltransferase family. ERF2/ZDHHC9 subfamily.

The protein resides in the endoplasmic reticulum membrane. The protein localises to the golgi apparatus membrane. It catalyses the reaction L-cysteinyl-[protein] + hexadecanoyl-CoA = S-hexadecanoyl-L-cysteinyl-[protein] + CoA. Its function is as follows. Palmitoyltransferase that could catalyze the addition of palmitate onto various protein substrates. The protein is Palmitoyltransferase ZDHHC14 (zdhhc14) of Danio rerio (Zebrafish).